The sequence spans 89 residues: Small ribosomal subunit protein uS15 (89 aa).

Belongs to the universal ribosomal protein uS15 family. In terms of assembly, part of the 30S ribosomal subunit. Forms a bridge to the 50S subunit in the 70S ribosome, contacting the 23S rRNA.

Its function is as follows. One of the primary rRNA binding proteins, it binds directly to 16S rRNA where it helps nucleate assembly of the platform of the 30S subunit by binding and bridging several RNA helices of the 16S rRNA. Functionally, forms an intersubunit bridge (bridge B4) with the 23S rRNA of the 50S subunit in the ribosome. This is Small ribosomal subunit protein uS15 from Lactobacillus johnsonii (strain CNCM I-12250 / La1 / NCC 533).